Reading from the N-terminus, the 324-residue chain is MSPAAAAEPDGDQQDRHVSKLIFCFFVFGAVLLCVGVLLSIFGFQACQYKPLPDCPMVLKVAGPACAVVGLGAVILARSRAQLQLRAGLQRGQQMDPDRAFICGESRQFAQCLIFGFLFLTSGMLISVLGIWVPGCGSNWAQEPLNETDTGDSEPRMCGFLSLQIMGPLIVLVGLCFFVVAHVKKRNTLNAGQDASEREEGQIQIMEPVQVTVGDSVIIFPPPPPPYFPESSASAVAESPGTNSLLPNENPPSYYSIFNYGRTPTSEGAASERDCESIYTISGTNSSSEASHTPHLPSELPPRYEEKENAAATFLPLSSEPSPP.

The next 4 helical transmembrane spans lie at 22–42 (IFCF…LSIF), 57–77 (MVLK…VILA), 113–133 (LIFG…GIWV), and 160–180 (FLSL…FFVV). A compositionally biased stretch (low complexity) spans 229–239 (PESSASAVAES). Disordered stretches follow at residues 229-248 (PESS…LLPN) and 279-304 (YTIS…PPRY). Over residues 279–291 (YTISGTNSSSEAS) the composition is skewed to polar residues.

It is found in the membrane. The sequence is that of Transmembrane protein 171 (TMEM171) from Homo sapiens (Human).